The chain runs to 151 residues: 3-hydroxyacyl-[acyl-carrier-protein] dehydratase FabZ (151 aa).

The active site involves histidine 57.

It belongs to the thioester dehydratase family. FabZ subfamily.

It localises to the cytoplasm. The enzyme catalyses a (3R)-hydroxyacyl-[ACP] = a (2E)-enoyl-[ACP] + H2O. Functionally, involved in unsaturated fatty acids biosynthesis. Catalyzes the dehydration of short chain beta-hydroxyacyl-ACPs and long chain saturated and unsaturated beta-hydroxyacyl-ACPs. The protein is 3-hydroxyacyl-[acyl-carrier-protein] dehydratase FabZ of Synechococcus sp. (strain CC9605).